A 115-amino-acid chain; its full sequence is MNMLLTMLTNITLSTLLISIAFWLPQLNIYTEKANPYECGFDPMSSARLPFSMKFFLVAITFLLFDLEIALLLPIPWAIQVKDINTMTLTAFILVSILALGLAYEWTQKGLEWTE.

A run of 3 helical transmembrane segments spans residues 4–24 (LLTMLTNITLSTLLISIAFWL), 55–75 (FFLVAITFLLFDLEIALLLPI), and 84–104 (INTMTLTAFILVSILALGLAY).

It belongs to the complex I subunit 3 family. In terms of assembly, core subunit of respiratory chain NADH dehydrogenase (Complex I) which is composed of 45 different subunits. Interacts with TMEM186. Interacts with TMEM242.

It is found in the mitochondrion inner membrane. The catalysed reaction is a ubiquinone + NADH + 5 H(+)(in) = a ubiquinol + NAD(+) + 4 H(+)(out). Core subunit of the mitochondrial membrane respiratory chain NADH dehydrogenase (Complex I) which catalyzes electron transfer from NADH through the respiratory chain, using ubiquinone as an electron acceptor. Essential for the catalytic activity of complex I. The polypeptide is NADH-ubiquinone oxidoreductase chain 3 (Neotoma lepida (Desert woodrat)).